Here is a 615-residue protein sequence, read N- to C-terminus: 1-deoxy-D-xylulose-5-phosphate synthase (615 aa).

Residues histidine 72 and 111-113 (GHS) contribute to the thiamine diphosphate site. Aspartate 142 is a binding site for Mg(2+). Thiamine diphosphate is bound by residues 143–144 (GA), asparagine 171, tyrosine 278, and glutamate 360. Asparagine 171 provides a ligand contact to Mg(2+).

The protein belongs to the transketolase family. DXPS subfamily. In terms of assembly, homodimer. Mg(2+) serves as cofactor. It depends on thiamine diphosphate as a cofactor.

The catalysed reaction is D-glyceraldehyde 3-phosphate + pyruvate + H(+) = 1-deoxy-D-xylulose 5-phosphate + CO2. It functions in the pathway metabolic intermediate biosynthesis; 1-deoxy-D-xylulose 5-phosphate biosynthesis; 1-deoxy-D-xylulose 5-phosphate from D-glyceraldehyde 3-phosphate and pyruvate: step 1/1. Its function is as follows. Catalyzes the acyloin condensation reaction between C atoms 2 and 3 of pyruvate and glyceraldehyde 3-phosphate to yield 1-deoxy-D-xylulose-5-phosphate (DXP). The polypeptide is 1-deoxy-D-xylulose-5-phosphate synthase (Campylobacter jejuni subsp. jejuni serotype O:23/36 (strain 81-176)).